The following is a 214-amino-acid chain: MFVLVNLKAYPCDPVAIAEAAADVAETTPATIAVAPQPADIGRVADTGATTYAQHVSPTEHGSHTGSVLAESVADNGAVGTLLNHSEHRRRLADIDGSVAAAERAGLDTVVCANNPAQVAAAAALGPDAVAVEPPALIGTGTPVSQADPDIVSDAVAAAEAVDPSVDVYCGAGITTGEDVVSAGDLGASGVLLASGVAKADDPRAALADLVAPL.

6 to 8 (NLK) provides a ligand contact to substrate. Catalysis depends on histidine 85, which acts as the Electrophile. The Proton acceptor role is filled by glutamate 133. Residues isoleucine 138, glycine 173, and 194-195 (AS) each bind substrate.

The protein belongs to the triosephosphate isomerase family. As to quaternary structure, homotetramer; dimer of dimers.

It localises to the cytoplasm. The enzyme catalyses D-glyceraldehyde 3-phosphate = dihydroxyacetone phosphate. Its pathway is carbohydrate biosynthesis; gluconeogenesis. The protein operates within carbohydrate degradation; glycolysis; D-glyceraldehyde 3-phosphate from glycerone phosphate: step 1/1. Involved in the gluconeogenesis. Catalyzes stereospecifically the conversion of dihydroxyacetone phosphate (DHAP) to D-glyceraldehyde-3-phosphate (G3P). In Halobacterium salinarum (strain ATCC 700922 / JCM 11081 / NRC-1) (Halobacterium halobium), this protein is Triosephosphate isomerase.